The primary structure comprises 422 residues: tRNA hydroxylation protein P (422 aa).

The first 58 residues, 1-58 (MNQVELLSPAGNLKKLKIALNYGADAVYGGVSHFSLRNRAGKEFTLETFKEGIDYAHA), serve as a signal peptide directing secretion.

Belongs to the peptidase U32 family.

Functionally, involved in prephenate-dependent formation of 5-hydroxyuridine (ho5U) modification at position 34 in tRNAs, the first step in 5-carboxymethoxyuridine (cmo5U) biosynthesis. The protein is tRNA hydroxylation protein P of Helicobacter pylori (strain J99 / ATCC 700824) (Campylobacter pylori J99).